The following is a 364-amino-acid chain: tRNA 2-selenouridine synthase (364 aa).

The region spanning 12–135 is the Rhodanese domain; the sequence is FLNDRPMMDT…MRTFLLDTTE (124 aa). Residue C95 is the S-selanylcysteine intermediate of the active site.

This sequence belongs to the SelU family. Monomer.

The catalysed reaction is 5-methylaminomethyl-2-thiouridine(34) in tRNA + selenophosphate + (2E)-geranyl diphosphate + H2O + H(+) = 5-methylaminomethyl-2-selenouridine(34) in tRNA + (2E)-thiogeraniol + phosphate + diphosphate. The enzyme catalyses 5-methylaminomethyl-2-thiouridine(34) in tRNA + (2E)-geranyl diphosphate = 5-methylaminomethyl-S-(2E)-geranyl-thiouridine(34) in tRNA + diphosphate. It carries out the reaction 5-methylaminomethyl-S-(2E)-geranyl-thiouridine(34) in tRNA + selenophosphate + H(+) = 5-methylaminomethyl-2-(Se-phospho)selenouridine(34) in tRNA + (2E)-thiogeraniol. It catalyses the reaction 5-methylaminomethyl-2-(Se-phospho)selenouridine(34) in tRNA + H2O = 5-methylaminomethyl-2-selenouridine(34) in tRNA + phosphate. Functionally, involved in the post-transcriptional modification of the uridine at the wobble position (U34) of tRNA(Lys), tRNA(Glu) and tRNA(Gln). Catalyzes the conversion of 2-thiouridine (S2U-RNA) to 2-selenouridine (Se2U-RNA). Acts in a two-step process involving geranylation of 2-thiouridine (S2U) to S-geranyl-2-thiouridine (geS2U) and subsequent selenation of the latter derivative to 2-selenouridine (Se2U) in the tRNA chain. In Pseudomonas fluorescens (strain ATCC BAA-477 / NRRL B-23932 / Pf-5), this protein is tRNA 2-selenouridine synthase.